Here is a 272-residue protein sequence, read N- to C-terminus: 3-methyl-2-oxobutanoate hydroxymethyltransferase (272 aa).

2 residues coordinate Mg(2+): Asp51 and Asp90. 3-methyl-2-oxobutanoate contacts are provided by residues Asp51–Ser52, Asp90, and Lys118. Mg(2+) is bound at residue Glu120. Glu187 acts as the Proton acceptor in catalysis.

Belongs to the PanB family. As to quaternary structure, homodecamer; pentamer of dimers. Mg(2+) serves as cofactor.

The protein resides in the cytoplasm. It carries out the reaction 3-methyl-2-oxobutanoate + (6R)-5,10-methylene-5,6,7,8-tetrahydrofolate + H2O = 2-dehydropantoate + (6S)-5,6,7,8-tetrahydrofolate. Its pathway is cofactor biosynthesis; (R)-pantothenate biosynthesis; (R)-pantoate from 3-methyl-2-oxobutanoate: step 1/2. In terms of biological role, catalyzes the reversible reaction in which hydroxymethyl group from 5,10-methylenetetrahydrofolate is transferred onto alpha-ketoisovalerate to form ketopantoate. The polypeptide is 3-methyl-2-oxobutanoate hydroxymethyltransferase (Xylella fastidiosa (strain M12)).